The chain runs to 882 residues: Valine--tRNA ligase (882 aa).

The short motif at 45–55 (PNVTGKLHLGH) is the 'HIGH' region element. Positions 519–523 (KMSKS) match the 'KMSKS' region motif. Lysine 522 is a binding site for ATP. Residues 808–882 (LADLLNVEEE…RIAEMKKIKS (75 aa)) adopt a coiled-coil conformation.

The protein belongs to the class-I aminoacyl-tRNA synthetase family. ValS type 1 subfamily. Monomer.

Its subcellular location is the cytoplasm. It catalyses the reaction tRNA(Val) + L-valine + ATP = L-valyl-tRNA(Val) + AMP + diphosphate. Functionally, catalyzes the attachment of valine to tRNA(Val). As ValRS can inadvertently accommodate and process structurally similar amino acids such as threonine, to avoid such errors, it has a 'posttransfer' editing activity that hydrolyzes mischarged Thr-tRNA(Val) in a tRNA-dependent manner. The polypeptide is Valine--tRNA ligase (Streptococcus pyogenes serotype M1).